A 178-amino-acid polypeptide reads, in one-letter code: CDP-archaeol synthase (178 aa).

The next 5 membrane-spanning stretches (helical) occupy residues 7-27 (LFVSFWFILPAYTANAMACIF), 56-76 (FFGVFFGIVTAIIQYLVSNLG), 91-111 (VIIGFLLSFGALFGDMFGSFL), 125-145 (VLDQITFIVFALIFVSYYYLV), and 149-169 (ISITLLILSPVVHILSNIIAY).

It belongs to the CDP-archaeol synthase family. Mg(2+) serves as cofactor.

The protein resides in the cell membrane. The catalysed reaction is 2,3-bis-O-(geranylgeranyl)-sn-glycerol 1-phosphate + CTP + H(+) = CDP-2,3-bis-O-(geranylgeranyl)-sn-glycerol + diphosphate. Its pathway is membrane lipid metabolism; glycerophospholipid metabolism. Functionally, catalyzes the formation of CDP-2,3-bis-(O-geranylgeranyl)-sn-glycerol (CDP-archaeol) from 2,3-bis-(O-geranylgeranyl)-sn-glycerol 1-phosphate (DGGGP) and CTP. This reaction is the third ether-bond-formation step in the biosynthesis of archaeal membrane lipids. The polypeptide is CDP-archaeol synthase (Methanococcus vannielii (strain ATCC 35089 / DSM 1224 / JCM 13029 / OCM 148 / SB)).